The chain runs to 547 residues: Solute carrier family 22 member 7 (547 aa).

The helical transmembrane segment at 21–41 (VALLALPRVLLPMHFLLPIFL) threads the bilayer. Residues 91-103 (NSTLWGEGQNSGE) are compositionally biased toward polar residues. The interval 91 to 112 (NSTLWGEGQNSGEQPEGEPSTV) is disordered. A run of 11 helical transmembrane segments spans residues 145-165 (AIST…GYLS), 179-199 (VSSL…MFAI), 203-223 (LTGM…LEWL), 233-253 (VLSS…GYLI), 258-278 (WLLL…WWVP), 345-365 (ISLC…GVSL), 367-387 (LSGL…VELP), 403-423 (LTMA…ILVS), 431-451 (TALA…AYLF), 465-485 (MGLT…AALL), and 492-512 (LPKL…LLLP). The interval 521–547 (ETIQDVERKSAPSSLQEEEMPMKQVQD) is disordered.

This sequence belongs to the major facilitator (TC 2.A.1) superfamily. Organic cation transporter (TC 2.A.1.19) family.

It localises to the basolateral cell membrane. The protein resides in the apical cell membrane. It is found in the cell membrane. The enzyme catalyses orotate(out) + L-glutamate(in) = orotate(in) + L-glutamate(out). It catalyses the reaction 3',5'-cyclic GMP(in) = 3',5'-cyclic GMP(out). It carries out the reaction GMP(in) = GMP(out). The catalysed reaction is 2'-deoxyguanosine(in) = 2'-deoxyguanosine(out). The enzyme catalyses GDP(in) = GDP(out). It catalyses the reaction guanosine(in) = guanosine(out). It carries out the reaction GTP(in) = GTP(out). The catalysed reaction is 3',5'-cyclic AMP(in) = 3',5'-cyclic AMP(out). The enzyme catalyses creatinine(in) = creatinine(out). It catalyses the reaction prostaglandin E2(out) = prostaglandin E2(in). It carries out the reaction 2-oxoglutarate(in) = 2-oxoglutarate(out). The catalysed reaction is glutarate(in) = glutarate(out). The enzyme catalyses urate(out) = urate(in). It catalyses the reaction estrone 3-sulfate(out) = estrone 3-sulfate(in). Its function is as follows. Functions as a Na(+)-independent bidirectional multispecific transporter. Contributes to the renal and hepatic elimination of endogenous organic compounds from the systemic circulation into the urine and bile, respectively. Capable of transporting a wide range of purine and pyrimidine nucleobases, nucleosides and nucleotides, with cGMP, 2'deoxyguanosine and GMP being the preferred substrates. Functions as a pH- and chloride-independent cGMP bidirectional facilitative transporter that can regulate both intracellular and extracellular levels of cGMP and may be involved in cGMP signaling pathways. Mediates orotate/glutamate bidirectional exchange and most likely display a physiological role in hepatic release of glutamate into the blood. Involved in renal secretion and possible reabsorption of creatinine. Able to uptake prostaglandin E2 (PGE2) and may contribute to PGE2 renal excretion. Also transports alpha-ketoglutarate and urate. Apart from the orotate/glutamate exchange, the counterions for the uptake of other SLC22A7/OAT2 substrates remain to be identified. This chain is Solute carrier family 22 member 7 (SLC22A7), found in Bos taurus (Bovine).